A 154-amino-acid chain; its full sequence is Myoglobin (154 aa).

In terms of domain architecture, Globin spans Gly2–Lys148. His65 contributes to the nitrite binding site. Position 65 (His65) interacts with O2. Heme b is bound at residue His94.

This sequence belongs to the globin family. In terms of assembly, monomeric.

The protein resides in the cytoplasm. Its subcellular location is the sarcoplasm. It carries out the reaction Fe(III)-heme b-[protein] + nitric oxide + H2O = Fe(II)-heme b-[protein] + nitrite + 2 H(+). It catalyses the reaction H2O2 + AH2 = A + 2 H2O. In terms of biological role, monomeric heme protein which primary function is to store oxygen and facilitate its diffusion within muscle tissues. Reversibly binds oxygen through a pentacoordinated heme iron and enables its timely and efficient release as needed during periods of heightened demand. Depending on the oxidative conditions of tissues and cells, and in addition to its ability to bind oxygen, it also has a nitrite reductase activity whereby it regulates the production of bioactive nitric oxide. Under stress conditions, like hypoxia and anoxia, it also protects cells against reactive oxygen species thanks to its pseudoperoxidase activity. This is Myoglobin (MB) from Chelonia mydas (Green sea-turtle).